A 340-amino-acid chain; its full sequence is Chitinase 2 (340 aa).

The N-terminal stretch at 1-32 is a signal peptide; it reads MSTPRAAASLAKKAALVALAVLAAALATAARA. The 41-residue stretch at 33-73 folds into the Chitin-binding type-1 domain; sequence EQCGAQAGGARCPNCLCCSRWGWCGTTSDFCGDGCQSQCSG. Cystine bridges form between Cys35–Cys50, Cys44–Cys56, Cys47–Cys74, Cys49–Cys63, Cys67–Cys71, Cys110–Cys172, Cys184–Cys192, and Cys291–Cys323. The active-site Proton donor is the Glu154.

The protein belongs to the glycosyl hydrolase 19 family. Chitinase class I subfamily. As to expression, expressed in roots, sheaths and meristems.

It catalyses the reaction Random endo-hydrolysis of N-acetyl-beta-D-glucosaminide (1-&gt;4)-beta-linkages in chitin and chitodextrins.. Its function is as follows. Hydrolyzes chitin and plays a role in defense against fungal pathogens containing chitin. Its overexpression confers enhanced resistance to sheath blight pathogen (R.solani). In Oryza sativa subsp. japonica (Rice), this protein is Chitinase 2 (Cht2).